The sequence spans 197 residues: dTTP/UTP pyrophosphatase (197 aa).

Residue aspartate 70 is the Proton acceptor of the active site.

The protein belongs to the Maf family. YhdE subfamily. It depends on a divalent metal cation as a cofactor.

The protein resides in the cytoplasm. It catalyses the reaction dTTP + H2O = dTMP + diphosphate + H(+). It carries out the reaction UTP + H2O = UMP + diphosphate + H(+). Functionally, nucleoside triphosphate pyrophosphatase that hydrolyzes dTTP and UTP. May have a dual role in cell division arrest and in preventing the incorporation of modified nucleotides into cellular nucleic acids. This Shigella boydii serotype 4 (strain Sb227) protein is dTTP/UTP pyrophosphatase (yceF2).